The primary structure comprises 324 residues: Beta-ketoacyl-[acyl-carrier-protein] synthase III (324 aa).

Active-site residues include Cys-114 and His-251. The interval 252 to 256 (QANRR) is ACP-binding. Residue Asn-281 is part of the active site.

It belongs to the thiolase-like superfamily. FabH family. As to quaternary structure, homodimer.

It is found in the cytoplasm. The enzyme catalyses malonyl-[ACP] + acetyl-CoA + H(+) = 3-oxobutanoyl-[ACP] + CO2 + CoA. It participates in lipid metabolism; fatty acid biosynthesis. Catalyzes the condensation reaction of fatty acid synthesis by the addition to an acyl acceptor of two carbons from malonyl-ACP. Catalyzes the first condensation reaction which initiates fatty acid synthesis and may therefore play a role in governing the total rate of fatty acid production. Possesses both acetoacetyl-ACP synthase and acetyl transacylase activities. Its substrate specificity determines the biosynthesis of branched-chain and/or straight-chain of fatty acids. This is Beta-ketoacyl-[acyl-carrier-protein] synthase III from Paramagnetospirillum magneticum (strain ATCC 700264 / AMB-1) (Magnetospirillum magneticum).